The primary structure comprises 127 residues: Ycf91-like protein (127 aa).

It belongs to the ycf91 family.

The protein is Ycf91-like protein of Nostoc sp. (strain PCC 7120 / SAG 25.82 / UTEX 2576).